Consider the following 157-residue polypeptide: UPF0587 protein C2D10.03c (157 aa).

4 residues coordinate Zn(2+): C34, C37, C68, and C71.

The protein belongs to the UPF0587 family.

The chain is UPF0587 protein C2D10.03c from Schizosaccharomyces pombe (strain 972 / ATCC 24843) (Fission yeast).